The following is a 634-amino-acid chain: Microtubule-associated protein 70-2 (634 aa).

The tract at residues 1-57 is disordered; sequence MSDVSGDGDLSATVTEHEVTPQPPVSSATYPSLTVSASYKESSGGKSSSKRRPIRPS. The segment covering 25 to 35 has biased composition (polar residues); the sequence is VSSATYPSLTV. The segment covering 36 to 47 has biased composition (low complexity); that stretch reads SASYKESSGGKS. The stretch at 74 to 392 forms a coiled coil; the sequence is DPVKVELNRL…LRLKVLEETL (319 aa). Residues 258–494 form a required for targeting to microtubules region; it reads ILDRMHRQKV…YSFNKATDDS (237 aa). Composition is skewed to polar residues over residues 393–417 and 443–464; these read RGTS…SRRQ and MRHS…TSKS. Disordered regions lie at residues 393–526 and 594–634; these read RGTS…SVPG and VEKD…KSTQ. Residues 532-601 adopt a coiled-coil conformation; that stretch reads LQKEVVSLRK…MRVEKDQDAR (70 aa). Positions 605-616 are enriched in polar residues; the sequence is FSNSKSPSNTAQ.

It belongs to the MAP70 family.

The protein resides in the cytoplasm. The protein localises to the cytoskeleton. Functionally, plant-specific protein that interact with microtubules. In Arabidopsis thaliana (Mouse-ear cress), this protein is Microtubule-associated protein 70-2 (MAP70.2).